We begin with the raw amino-acid sequence, 252 residues long: Transmembrane ascorbate-dependent reductase CYB561 (252 aa).

Met1 is modified (N-acetylmethionine). Topologically, residues Met1–Tyr17 are cytoplasmic. The chain crosses the membrane as a helical span at residues Val18–Met38. Residues Phe20–Thr221 enclose the Cytochrome b561 domain. Topologically, residues Tyr39 to Asn52 are vesicular. A helical transmembrane segment spans residues Val53–Tyr73. Residues His54, Arg74, and Lys81 each contribute to the heme b site. Residues Arg74–Val86 lie on the Cytoplasmic side of the membrane. The L-ascorbate site is built by Lys81 and Lys85. The chain crosses the membrane as a helical span at residues Leu87 to Phe107. Heme b contacts are provided by residues His88, Asp117–Ser120, and His122. At Glu108–Cys125 the chain is on the vesicular side. Residues Gly126–Phe146 form a helical membrane-spanning segment. At Pro147–Pro159 the chain is on the cytoplasmic side. Arg154 provides a ligand contact to L-ascorbate. Residues Gln160–Leu180 traverse the membrane as a helical segment. Residues His161 and Glu182 each contribute to the heme b site. Topologically, residues Lys181–Gly199 are vesicular. A helical membrane pass occupies residues Val200–Leu220. Topologically, residues Thr221–Gln252 are cytoplasmic. Residue Lys226 participates in heme b binding. A phosphoserine mark is found at Ser248 and Ser250.

Heme b serves as cofactor. In terms of tissue distribution, expressed in the adrenal medulla and all brain regions, but not in visceral organs.

The protein localises to the cytoplasmic vesicle. Its subcellular location is the secretory vesicle. It is found in the chromaffin granule membrane. The enzyme catalyses monodehydro-L-ascorbate radical(out) + L-ascorbate(in) = monodehydro-L-ascorbate radical(in) + L-ascorbate(out). Transmembrane reductase that uses ascorbate as an electron donor in the cytoplasm and transfers electrons across membranes to reduce monodehydro-L-ascorbate radical in the lumen of secretory vesicles. It is therefore involved the regeneration and homeostasis within secretory vesicles of ascorbate which in turn provides reducing equivalents needed to support the activity of intravesicular enzymes. This is Transmembrane ascorbate-dependent reductase CYB561 (CYB561) from Bos taurus (Bovine).